A 159-amino-acid polypeptide reads, in one-letter code: Small ribosomal subunit protein uS9 (159 aa).

Belongs to the universal ribosomal protein uS9 family.

In Rickettsia peacockii (strain Rustic), this protein is Small ribosomal subunit protein uS9.